The chain runs to 282 residues: Bifunctional protein FolD 2 (282 aa).

Residues Gly165–Ser167 and Ser190 each bind NADP(+).

It belongs to the tetrahydrofolate dehydrogenase/cyclohydrolase family. As to quaternary structure, homodimer.

It carries out the reaction (6R)-5,10-methylene-5,6,7,8-tetrahydrofolate + NADP(+) = (6R)-5,10-methenyltetrahydrofolate + NADPH. The catalysed reaction is (6R)-5,10-methenyltetrahydrofolate + H2O = (6R)-10-formyltetrahydrofolate + H(+). It functions in the pathway one-carbon metabolism; tetrahydrofolate interconversion. Functionally, catalyzes the oxidation of 5,10-methylenetetrahydrofolate to 5,10-methenyltetrahydrofolate and then the hydrolysis of 5,10-methenyltetrahydrofolate to 10-formyltetrahydrofolate. The sequence is that of Bifunctional protein FolD 2 from Acinetobacter baylyi (strain ATCC 33305 / BD413 / ADP1).